The following is a 372-amino-acid chain: Putative glutamate--cysteine ligase 2 (372 aa).

It belongs to the glutamate--cysteine ligase type 2 family. YbdK subfamily. As to quaternary structure, homodimer.

The catalysed reaction is L-cysteine + L-glutamate + ATP = gamma-L-glutamyl-L-cysteine + ADP + phosphate + H(+). Its function is as follows. ATP-dependent carboxylate-amine ligase which exhibits weak glutamate--cysteine ligase activity. The protein is Putative glutamate--cysteine ligase 2 (ybdK) of Salmonella paratyphi A (strain AKU_12601).